The chain runs to 61 residues: Large ribosomal subunit protein uL30 (61 aa).

Belongs to the universal ribosomal protein uL30 family. Part of the 50S ribosomal subunit.

This is Large ribosomal subunit protein uL30 from Acidithiobacillus ferrooxidans (strain ATCC 23270 / DSM 14882 / CIP 104768 / NCIMB 8455) (Ferrobacillus ferrooxidans (strain ATCC 23270)).